The sequence spans 422 residues: Proline-rich protein 22 (422 aa).

Disordered stretches follow at residues 1-35, 306-325, and 363-422; these read MQHP…PAPT, LCEV…SADD, and EEQP…ATPH. Positions 383-400 are enriched in basic residues; the sequence is GKRKASTAKKGKPGRKAR. Basic and acidic residues predominate over residues 413 to 422; sequence PREDLGATPH.

The protein is Proline-rich protein 22 (PRR22) of Homo sapiens (Human).